We begin with the raw amino-acid sequence, 309 residues long: Cytochrome c1, heme protein, mitochondrial (309 aa).

Residues 1–61 constitute a mitochondrion transit peptide; sequence MFSNLSKRWA…LYADSLTAEA (61 aa). The Mitochondrial intermembrane portion of the chain corresponds to 62 to 262; the sequence is MTAAEHGLHA…TFLNWCAEPE (201 aa). Residues 88–241 form the Cytochrome c domain; sequence ASIRRGYQVY…DMVEYEDGTP (154 aa). Heme c is bound by residues Cys101, Cys104, and His105. Over residues 131–140 the composition is skewed to acidic residues; that stretch reads EFEYDDEPDE. The segment at 131–168 is disordered; it reads EFEYDDEPDEQGNPKKRPGKLSDYIPGPYPNEQAARAA. Position 225 (Met225) interacts with heme c. The chain crosses the membrane as a helical span at residues 263 to 296; the sequence is HDERKRLGLKTVIILSSLYLLSIWVKKFKWAGIK. At 297-309 the chain is on the mitochondrial matrix side; that stretch reads TRKFVFNPPKPRK.

The protein belongs to the cytochrome c family. Component of the ubiquinol-cytochrome c oxidoreductase (cytochrome b-c1 complex, complex III, CIII), a multisubunit enzyme composed of 10 subunits. The complex is composed of 3 respiratory subunits cytochrome b (COB), cytochrome c1 (CYT1) and Rieske protein (RIP1), 2 core protein subunits COR1 and QCR2, and 5 low-molecular weight protein subunits QCR6, QCR7, QCR8, QCR9 and QCR10. The complex exists as an obligatory dimer and forms supercomplexes (SCs) in the inner mitochondrial membrane with a monomer or a dimer of cytochrome c oxidase (complex IV, CIV), resulting in 2 different assemblies (supercomplexes III(2)IV and III(2)IV(2)). CYT1 interacts with COX5A at the CIII-CIV interface. Requires heme c as cofactor.

It is found in the mitochondrion inner membrane. It catalyses the reaction a quinol + 2 Fe(III)-[cytochrome c](out) = a quinone + 2 Fe(II)-[cytochrome c](out) + 2 H(+)(out). Functionally, component of the ubiquinol-cytochrome c oxidoreductase, a multisubunit transmembrane complex that is part of the mitochondrial electron transport chain which drives oxidative phosphorylation. The respiratory chain contains 3 multisubunit complexes succinate dehydrogenase (complex II, CII), ubiquinol-cytochrome c oxidoreductase (cytochrome b-c1 complex, complex III, CIII) and cytochrome c oxidase (complex IV, CIV), that cooperate to transfer electrons derived from NADH and succinate to molecular oxygen, creating an electrochemical gradient over the inner membrane that drives transmembrane transport and the ATP synthase. The cytochrome b-c1 complex catalyzes electron transfer from ubiquinol to cytochrome c, linking this redox reaction to translocation of protons across the mitochondrial inner membrane, with protons being carried across the membrane as hydrogens on the quinol. In the process called Q cycle, 2 protons are consumed from the matrix, 4 protons are released into the intermembrane space and 2 electrons are passed to cytochrome c. Cytochrome c1 is a catalytic core subunit containing a c-type heme. It transfers electrons from the [2Fe-2S] iron-sulfur cluster of the Rieske protein to cytochrome c. The sequence is that of Cytochrome c1, heme protein, mitochondrial (CYT1) from Saccharomyces cerevisiae (strain ATCC 204508 / S288c) (Baker's yeast).